The chain runs to 279 residues: Topoisomerase I damage affected protein 4 (279 aa).

Topologically, residues 1-32 are extracellular; that stretch reads MNANSTTTAIGLTSPFEKLSFFPHSSNLILAH. Residues 33 to 53 form a helical membrane-spanning segment; sequence LHEIIFSFVFYQLAFSVVAPF. Over 54-79 the chain is Cytoplasmic; the sequence is LNKVVFRKHYTTIRDPLLKIDFNVHT. The region spanning 70–271 is the TLC domain; that stretch reads LLKIDFNVHT…MIRIAKKLAK (202 aa). A helical membrane pass occupies residues 80-100; the sequence is VSMIQAVVSNTVLLPTLTTPM. Over 101–110 the chain is Extracellular; it reads HYNVVTYTDS. Residues 111-131 traverse the membrane as a helical segment; the sequence is YSSMVSSLSAGYFIWDLTMCV. Topologically, residues 132-135 are cytoplasmic; the sequence is RYFK. A helical membrane pass occupies residues 136 to 156; that stretch reads LYGLEFTGHAIGSVYVMLLSL. The Extracellular portion of the chain corresponds to 157–162; that stretch reads RPFCQP. The helical transmembrane segment at 163–183 threads the bilayer; it reads WIGRFLIYEASTPFVNINWFI. At 184 to 192 the chain is on the cytoplasmic side; the sequence is MQCNAKSKN. A helical transmembrane segment spans residues 193–213; it reads SIPLWFNVVNGLLLMTVFFVV. Residues 214–238 are Extracellular-facing; it reads RICWGSIASALLFRQMWKVRDELPK. A helical membrane pass occupies residues 239–259; sequence FSAVTMMSLNIFMNLLNVLWF. Topologically, residues 260–279 are cytoplasmic; that stretch reads KKMIRIAKKLAKPAPTSKLD.

It belongs to the TMEM56 family.

The protein localises to the membrane. This chain is Topoisomerase I damage affected protein 4 (TDA4), found in Saccharomyces cerevisiae (strain ATCC 204508 / S288c) (Baker's yeast).